The primary structure comprises 253 residues: U2 small nuclear ribonucleoprotein A' (253 aa).

LRR repeat units follow at residues 19-40 (KDRE…GIAK), 41-62 (DQDA…PFFP), 63-84 (RLHT…IAST), and 87-108 (NLTT…DPLR). In terms of domain architecture, LRRCT spans 121–159 (NPVTRKEHYRYWVIWRIPSVRFLDYQKVKDAERAKAKEL). A disordered region spans residues 228-253 (ELNEGRIPGGALDAGEDSEDENQMQT). A compositionally biased stretch (acidic residues) spans 241 to 253 (AGEDSEDENQMQT).

This sequence belongs to the U2 small nuclear ribonucleoprotein A family. As to quaternary structure, associated with the spliceosome.

It localises to the nucleus. In terms of biological role, involved in pre-mRNA splicing. The protein is U2 small nuclear ribonucleoprotein A' (lea1) of Aspergillus fumigatus (strain ATCC MYA-4609 / CBS 101355 / FGSC A1100 / Af293) (Neosartorya fumigata).